Reading from the N-terminus, the 675-residue chain is Nexilin (675 aa).

The disordered stretch occupies residues 1-66 (MNDISQKAEI…RKEQYIRERE (66 aa)). Lysine 16 is subject to Phosphoserine. The span at 27 to 66 (GKGDVKDKFEAMQRAREERNQRRSRDEKQRRKEQYIRERE) shows a compositional bias: basic and acidic residues. Serine 80 is modified (phosphoserine). The tract at residues 105–127 (RFAEMEKQRQEEQRKRTEEERKR) is disordered. Serine 241 is modified (phosphoserine). Disordered regions lie at residues 254 to 278 (LERQRQENRKKQAEEEARKRLEEEK) and 313 to 336 (SFEEMERQRREDEKRKAEEEARRR). Residues serine 357 and serine 365 each carry the phosphoserine modification. The residue at position 370 (threonine 370) is a Phosphothreonine. 2 disordered regions span residues 487 to 513 (ENFHEEDDVDVRPARKSEAPFTHKVNM) and 551 to 584 (LQKKREEEEEEEGSIMNGSTAEDEEQTRSGAPWF). Serine 564 and serine 569 each carry phosphoserine. One can recognise an Ig-like domain in the interval 582–670 (PWFKKPLKNT…GSAASTCILT (89 aa)).

Interacts with F-actin. Abundantly expressed in heart and skeletal muscle, and at lower levels in placenta, lung, liver and pancreas. Also expressed in HeLaS3 and MOLT-4 cell lines.

It localises to the cytoplasm. It is found in the cytoskeleton. The protein localises to the cell junction. The protein resides in the adherens junction. Its subcellular location is the myofibril. It localises to the sarcomere. It is found in the z line. In terms of biological role, involved in regulating cell migration through association with the actin cytoskeleton. Has an essential role in the maintenance of Z line and sarcomere integrity. The polypeptide is Nexilin (Homo sapiens (Human)).